The chain runs to 160 residues: Eukaryotic translation initiation factor 5A (160 aa).

Residues Met-1–Ala-13 are compositionally biased toward basic and acidic residues. A disordered region spans residues Met-1–Pro-22. Residue Lys-53 is modified to Hypusine.

Belongs to the eIF-5A family. Post-translationally, lys-53 undergoes hypusination, a unique post-translational modification that consists in the addition of a butylamino group from spermidine to lysine side chain, leading to the formation of the unusual amino acid hypusine. eIF-5As are the only known proteins to undergo this modification, which is essential for their function.

In terms of biological role, translation factor that promotes translation elongation and termination, particularly upon ribosome stalling at specific amino acid sequence contexts. Binds between the exit (E) and peptidyl (P) site of the ribosome and promotes rescue of stalled ribosome: specifically required for efficient translation of polyproline-containing peptides as well as other motifs that stall the ribosome. Acts as a ribosome quality control (RQC) cofactor by joining the RQC complex to facilitate peptidyl transfer during CAT tailing step. The protein is Eukaryotic translation initiation factor 5A (TIF5A) of Zea mays (Maize).